The primary structure comprises 2835 residues: Vanchrobactin synthetase VabF (2835 aa).

Residues 16–452 are condensation 1; the sequence is EDQWPLIGTQ…IPPSEKQQIT (437 aa). The adenylation 1 stretch occupies residues 473-880; it reads QQTVESKPNE…GRCDHQIKIR (408 aa). Residues 988-1062 enclose the Carrier 1 domain; it reads APITQPEQLL…MMAGQMVPLQ (75 aa). An O-(pantetheine 4'-phosphoryl)serine modification is found at Ser1023. Condensation regions lie at residues 1081–1499 and 1539–1961; these read WFEE…KIQQ and DVLP…EWDL. Residues 1992-2394 form an adenylation 2 region; that stretch reads QQQRSPHQLA…GRSDDQIKIR (403 aa). In terms of domain architecture, Carrier 2 spans 2503-2578; sequence NAHPGLETQL…KLASLLLDDD (76 aa). Position 2538 is an O-(pantetheine 4'-phosphoryl)serine (Ser2538). A thioesterase region spans residues 2601 to 2821; sequence ALFCVNSASG…APENVRQIGE (221 aa).

The protein belongs to the NRP synthetase family. Pantetheine 4'-phosphate is required as a cofactor.

It carries out the reaction holo-[peptidyl-carrier protein] + L-arginine + ATP = L-arginyl-[peptidyl-carrier protein] + AMP + diphosphate. The catalysed reaction is holo-[peptidyl-carrier protein] + L-serine + ATP = L-seryl-[peptidyl-carrier protein] + AMP + diphosphate. It participates in siderophore biosynthesis. Its function is as follows. Involved in the synthesis of the siderophore vanchrobactin. Probably adenylates L-arginine via its first adenylation domain and loads it onto its first peptidyl carrier domain via a thioester linkage to the phosphopanthetheine moiety. In addition, may adenylate L-serine via its second adenylation domain and loads it onto its second peptidyl carrier domain via a thioester linkage to the phosphopanthetheine moiety. The thioesterase domain may release vanchrobactin after condensation of the siderophore components. The chain is Vanchrobactin synthetase VabF from Vibrio anguillarum (Listonella anguillarum).